The chain runs to 465 residues: Clusterin-like protein 1 (465 aa).

The first 20 residues, 1–20, serve as a signal peptide directing secretion; the sequence is MKPSLLVFTVYLLWLKDCHC. Positions 62–106 form a coiled coil; the sequence is MMERREEEHTNLMKTLKKCKEEKQEALKLMNEVQEHLEEEESLCQ. 4 cysteine pairs are disulfide-bonded: Cys-105/Cys-333, Cys-116/Cys-325, Cys-119/Cys-322, and Cys-124/Cys-315. Residues Asn-196, Asn-257, Asn-285, Asn-311, Asn-351, Asn-412, and Asn-430 are each glycosylated (N-linked (GlcNAc...) asparagine).

Belongs to the clusterin family. In terms of tissue distribution, retina-specific (at protein level). In the light-adapted retina, expressed in the outer segment of cone photoreceptors. In the dark-adapted retina, strongly expressed in the outer plexiform layer in the region of contact between the cone pedicles and second order neurons with little or no expression in the cone photoreceptor outer segments.

The protein localises to the secreted. The sequence is that of Clusterin-like protein 1 (CLUL1) from Canis lupus familiaris (Dog).